We begin with the raw amino-acid sequence, 530 residues long: Glucose-6-phosphate isomerase (530 aa).

Glu-356 serves as the catalytic Proton donor. Residues His-387 and Lys-502 contribute to the active site.

It belongs to the GPI family.

The protein resides in the cytoplasm. It carries out the reaction alpha-D-glucose 6-phosphate = beta-D-fructose 6-phosphate. It functions in the pathway carbohydrate biosynthesis; gluconeogenesis. Its pathway is carbohydrate degradation; glycolysis; D-glyceraldehyde 3-phosphate and glycerone phosphate from D-glucose: step 2/4. Catalyzes the reversible isomerization of glucose-6-phosphate to fructose-6-phosphate. This chain is Glucose-6-phosphate isomerase, found in Borreliella afzelii (strain PKo) (Borrelia afzelii).